The chain runs to 335 residues: Ornithine carbamoyltransferase 2, catabolic (335 aa).

Residues 62-65 (STRT), Gln89, Arg113, and 140-143 (HPTQ) each bind carbamoyl phosphate. Residues Asn172, Asp236, and 240–241 (SM) contribute to the L-ornithine site. Residues 277–278 (CL) and Arg322 each bind carbamoyl phosphate.

The protein belongs to the aspartate/ornithine carbamoyltransferase superfamily. OTCase family.

The protein resides in the cytoplasm. It catalyses the reaction carbamoyl phosphate + L-ornithine = L-citrulline + phosphate + H(+). It functions in the pathway amino-acid degradation; L-arginine degradation via ADI pathway; carbamoyl phosphate from L-arginine: step 2/2. Its function is as follows. Reversibly catalyzes the transfer of the carbamoyl group from carbamoyl phosphate (CP) to the N(epsilon) atom of ornithine (ORN) to produce L-citrulline. This chain is Ornithine carbamoyltransferase 2, catabolic (arcB2), found in Staphylococcus epidermidis (strain ATCC 12228 / FDA PCI 1200).